Reading from the N-terminus, the 1292-residue chain is Zinc finger CCCH domain-containing protein 44 (1292 aa).

Residues 1–10 are compositionally biased toward polar residues; the sequence is MENQQKQLQQ. Disordered regions lie at residues 1–24 and 72–107; these read MENQ…REES and IDEA…KKED. The segment at 110-176 adopts a PHD-type zinc-finger fold; that stretch reads EDVCFICFDG…SYMCYTCTFS (67 aa). 2 disordered regions span residues 256 to 313 and 401 to 426; these read PWKE…LKKA and KGAK…VHDP. Residues 313–396 enclose the SWIB/MDM2 domain; sequence APGDTSWATK…LKLLESHVLI (84 aa). Polar residues predominate over residues 404–414; the sequence is KTTNGETTHAV. One can recognise a Plus3 domain in the interval 453-586; that stretch reads AIDVHNINLI…TAATLQAMRI (134 aa). Disordered regions lie at residues 624 to 731, 777 to 832, 876 to 915, and 1170 to 1245; these read PEVH…TQGP, TTLP…SNDP, DVRE…INGS, and TTVE…HNNR. The span at 661-675 shows a compositional bias: low complexity; that stretch reads QNKGVNLNNVGNNVQ. Residues 689–698 show a composition bias toward basic and acidic residues; the sequence is VHADKDDCSK. Positions 699 to 708 are enriched in polar residues; sequence VHNNSSNIQE. In terms of domain architecture, GYF spans 716–770; sequence SEIWHYRDPTGKTQGPFSMVQLRRWKSSGHFPPYLRIWRAHENQDESVLLTDALA. Over residues 813–829 the composition is skewed to low complexity; that stretch reads VNTSATSSSSSTVTAHS. Polar residues-rich tracts occupy residues 882-899 and 906-915; these read GTDQ…NTTK and NGGSVSINGS. Composition is skewed to low complexity over residues 1188–1206 and 1231–1244; these read SSEP…SARG and NNGH…SHNN. Residues 1267-1292 form a C3H1-type zinc finger; the sequence is PKGLKICKFYESGYCKRGASCSFWHP.

This Arabidopsis thaliana (Mouse-ear cress) protein is Zinc finger CCCH domain-containing protein 44.